Here is a 594-residue protein sequence, read N- to C-terminus: Trehalase (594 aa).

The signal sequence occupies residues 1 to 27; sequence MDFLNKKIQKILFICILSFLIVNLTKS. 4 N-linked (GlcNAc...) asparagine glycosylation sites follow: Asn-56, Asn-70, Asn-97, and Asn-166. Substrate-binding positions include Arg-190, 197-198, and Asn-234; that span reads WD. The N-linked (GlcNAc...) asparagine glycan is linked to Asn-242. Position 243–245 (243–245) interacts with substrate; that stretch reads RSQ. Residues Asn-261 and Asn-305 are each glycosylated (N-linked (GlcNAc...) asparagine). Residues 312–314 and Gly-346 each bind substrate; that span reads RPE. Asp-348 functions as the Proton donor/acceptor in the catalytic mechanism. N-linked (GlcNAc...) asparagine glycosylation is found at Asn-361, Asn-395, Asn-513, and Asn-537. Glu-549 serves as the catalytic Proton donor/acceptor. Residue Glu-564 participates in substrate binding.

It belongs to the glycosyl hydrolase 37 family.

It catalyses the reaction alpha,alpha-trehalose + H2O = alpha-D-glucose + beta-D-glucose. The sequence is that of Trehalase (treh) from Dictyostelium discoideum (Social amoeba).